A 174-amino-acid chain; its full sequence is Ribosome maturation factor RimM (174 aa).

In terms of domain architecture, PRC barrel spans 91–164 (DDAWYPHQLQ…KVVLSPPGGL (74 aa)).

It belongs to the RimM family. Binds ribosomal protein uS19.

Its subcellular location is the cytoplasm. An accessory protein needed during the final step in the assembly of 30S ribosomal subunit, possibly for assembly of the head region. Essential for efficient processing of 16S rRNA. May be needed both before and after RbfA during the maturation of 16S rRNA. It has affinity for free ribosomal 30S subunits but not for 70S ribosomes. The protein is Ribosome maturation factor RimM of Kineococcus radiotolerans (strain ATCC BAA-149 / DSM 14245 / SRS30216).